A 178-amino-acid polypeptide reads, in one-letter code: Adenine phosphoribosyltransferase (178 aa).

It belongs to the purine/pyrimidine phosphoribosyltransferase family. In terms of assembly, homodimer.

Its subcellular location is the cytoplasm. The catalysed reaction is AMP + diphosphate = 5-phospho-alpha-D-ribose 1-diphosphate + adenine. The protein operates within purine metabolism; AMP biosynthesis via salvage pathway; AMP from adenine: step 1/1. Functionally, catalyzes a salvage reaction resulting in the formation of AMP, that is energically less costly than de novo synthesis. This chain is Adenine phosphoribosyltransferase, found in Bacteroides fragilis (strain YCH46).